A 290-amino-acid chain; its full sequence is Small ribosomal subunit biogenesis GTPase RsgA (290 aa).

The CP-type G domain occupies 62-213 (KNSLVRPPIV…IADTPGFSSL (152 aa)). Residues 111–114 (SKLD) and 156–164 (GQTGVGKST) each bind GTP. Residues C237, C242, H244, and C250 each contribute to the Zn(2+) site.

It belongs to the TRAFAC class YlqF/YawG GTPase family. RsgA subfamily. In terms of assembly, monomer. Associates with 30S ribosomal subunit, binds 16S rRNA. The cofactor is Zn(2+).

The protein resides in the cytoplasm. In terms of biological role, one of several proteins that assist in the late maturation steps of the functional core of the 30S ribosomal subunit. Helps release RbfA from mature subunits. May play a role in the assembly of ribosomal proteins into the subunit. Circularly permuted GTPase that catalyzes slow GTP hydrolysis, GTPase activity is stimulated by the 30S ribosomal subunit. This is Small ribosomal subunit biogenesis GTPase RsgA from Streptococcus agalactiae serotype III (strain NEM316).